A 348-amino-acid chain; its full sequence is Calcium homeostasis modulator protein 1 (348 aa).

Residues 1–20 (MDKFRMIFQFLQSNQESFMN) lie on the Cytoplasmic side of the membrane. A central pore region spans residues 9–36 (QFLQSNQESFMNGICGIMALASAQMYSA). A helical transmembrane segment spans residues 21 to 36 (GICGIMALASAQMYSA). Residues 37–48 (FDFNCPCLPGYN) are Extracellular-facing. 2 disulfide bridges follow: C41-C126 and C43-C160. The helical transmembrane segment at 49–71 (VVYSLGILLTPPLVLFLLGLVMN) threads the bilayer. The tract at residues 62–69 (VLFLLGLV) is phospholipid-binding. The Cytoplasmic segment spans residues 72-98 (NNISMLAEEWKRPAGRRAKDPAVLRYM). Residues 99–124 (FCSMAQRALIAPVVWVAVTLLDGKCF) form a helical membrane-spanning segment. The S-palmitoyl cysteine moiety is linked to residue C100. The interval 104–116 (QRALIAPVVWVAV) is phospholipid-binding. Over 125–179 (LCAFCTAVPVATLGNGSLVPGLPAPELARLLARVPCPEIYDGNWLLAREVAVRYL) the chain is Extracellular. N139 carries N-linked (GlcNAc...) asparagine glycosylation. Residues 180 to 205 (RCISQALGWSFVLLTTLLAFVVRSVR) form a helical membrane-spanning segment. Positions 191–201 (VLLTTLLAFVV) are phospholipid-binding. Topologically, residues 206–348 (PCFTQVAFLK…KEVATYFSKV (143 aa)) are cytoplasmic. C207 carries S-palmitoyl cysteine lipidation. The interval 324–348 (LMSNGWAGGEPRPPRKEVATYFSKV) is disordered.

The protein belongs to the CALHM family. In terms of assembly, oligomerizes to form hexamers and octamers. Does not form gap junctions. Associates with CALHM3 as a pore-forming subunit in a hetero-hexameric channel complex. In terms of processing, N-glycosylated. Assembly with CALHM3 is associated with N-glycan remodeling and formation of hybrid complex- and high mannose-type glycochains. This N-glycan processing regulates channel trafficking and gating kinetics. Post-translationally, palmitoylated by ZDHHC3, ZDHHC20 and possibly ZDHHC7. Palmitoylation regulates voltage-dependent gating of the channel by shifting it toward more depolarized potentials. As to expression, specifically expressed in type II taste bud cells (at protein level). Not expressed in brain.

The protein localises to the cell membrane. The protein resides in the endoplasmic reticulum membrane. It is found in the basolateral cell membrane. It catalyses the reaction ATP(in) = ATP(out). The enzyme catalyses Ca(2+)(in) = Ca(2+)(out). It carries out the reaction Mg(2+)(in) = Mg(2+)(out). The catalysed reaction is Na(+)(in) = Na(+)(out). It catalyses the reaction K(+)(in) = K(+)(out). The enzyme catalyses Li(+)(in) = Li(+)(out). It carries out the reaction Rb(+)(in) = Rb(+)(out). The catalysed reaction is Cs(+)(in) = Cs(+)(out). It catalyses the reaction chloride(in) = chloride(out). Regulated by membrane voltage and extracellular Ca(2+). Inhibited by Gd(3+), ruthenium red, and Zn(2+) and partially inhibited by 2-aminoethoxydiphenyl borate. Functionally, pore-forming subunit of gustatory voltage-gated ion channels required for sensory perception of sweet, bitter and umami tastes. With CALHM3 forms a fast-activating voltage-gated ATP-release channel in type II taste bud cells, ATP acting as a neurotransmitter to activate afferent neural gustatory pathways. Acts both as a voltage-gated and calcium-activated ion channel: mediates neuronal excitability in response to membrane depolarization and low extracellular Ca(2+) concentration. Has poor ion selectivity and forms a wide pore (around 14 Angstroms) that mediates permeation of small ions including Ca(2+), Na(+), K(+) and Cl(-), as well as larger ions such as ATP(4-). Mediates Ca(2+) influx and downstream activation of the ERK1 and ERK2 cascade in neurons. Triggers endoplasmic reticulum stress by reducing the calcium content of the endoplasmic reticulum. May indirectly control amyloid precursor protein (APP) proteolysis and aggregated amyloid-beta (Abeta) peptides levels in a Ca(2+) dependent manner. This chain is Calcium homeostasis modulator protein 1, found in Mus musculus (Mouse).